A 652-amino-acid polypeptide reads, in one-letter code: Apicoplast pyruvate carrier 2 (652 aa).

The Cytoplasmic portion of the chain corresponds to M1–T45. The tract at residues M1–S53 is disordered. 12 helical membrane-spanning segments follow: residues L46–S66, N126–Y146, G167–M187, L189–G209, T212–P232, L278–N298, L345–Q365, S385–S405, L417–E437, A445–L465, S467–G487, and L515–L535. The Cytoplasmic portion of the chain corresponds to T536 to P652.

This sequence belongs to the major facilitator superfamily. Interacts with apicoplast pyruvate carrier 1.

It is found in the plastid. Its subcellular location is the apicoplast. The protein localises to the membrane. In terms of biological role, along with apicoplast pyruvate carrier 1, forms apicoplast pyruvate carrier (APC) complex, which transports pyruvate into the apicoplast and may also transport amino acids like methionine, serine, glycine and tryptophan with low efficiency. Required for maintaining pyruvate-dependent metabolic activities in the apicoplast, such as synthesis of fatty acids, isopentenyl pyrophosphate (IPP), dimethylallyl pyrophosphate (DMAPP) and methylerythritol 4-phosphate (MEP). Required for maintaining the integrity of the apicoplast. Required for normal parasite growth. The polypeptide is Apicoplast pyruvate carrier 2 (Toxoplasma gondii).